Reading from the N-terminus, the 107-residue chain is NADH-quinone oxidoreductase subunit K 2 (107 aa).

3 helical membrane passes run L3–A23, V30–F50, and I67–I87.

This sequence belongs to the complex I subunit 4L family. As to quaternary structure, NDH-1 is composed of 14 different subunits. Subunits NuoA, H, J, K, L, M, N constitute the membrane sector of the complex.

The protein resides in the cell membrane. The catalysed reaction is a quinone + NADH + 5 H(+)(in) = a quinol + NAD(+) + 4 H(+)(out). Functionally, NDH-1 shuttles electrons from NADH, via FMN and iron-sulfur (Fe-S) centers, to quinones in the respiratory chain. The immediate electron acceptor for the enzyme in this species is believed to be a menaquinone. Couples the redox reaction to proton translocation (for every two electrons transferred, four hydrogen ions are translocated across the cytoplasmic membrane), and thus conserves the redox energy in a proton gradient. The chain is NADH-quinone oxidoreductase subunit K 2 from Symbiobacterium thermophilum (strain DSM 24528 / JCM 14929 / IAM 14863 / T).